The sequence spans 273 residues: MSFIEKLKNAWVSNNSLLCIGLDPDTEKFPDLFKTMAKPEAVFAFNKAIIDATHDLVCAYKPQIAYFSAEAAETSLEQTIAYIKTQYPHIPVILDAKRGDIGSTAQKYAAEAFERYQADAVTVNPYLGLDSITPFTAYRERGTILLCRTSNSGAADLQDLSVDGIPLYQKVAITARDHWNSHNNCLLVVGATWPEQMAAIRQLVGDMPFLVPGVGAQGGDVNAMVKAGKTADGNGLIISSSRAVLYASNGDDFAQAARAVALSLRQQINVARA.

The active-site Proton donor is the Lys-97.

Belongs to the OMP decarboxylase family. Type 2 subfamily.

The catalysed reaction is orotidine 5'-phosphate + H(+) = UMP + CO2. The protein operates within pyrimidine metabolism; UMP biosynthesis via de novo pathway; UMP from orotate: step 2/2. This is Orotidine 5'-phosphate decarboxylase from Cellvibrio japonicus (strain Ueda107) (Pseudomonas fluorescens subsp. cellulosa).